The chain runs to 41 residues: Cytochrome b559 subunit beta (41 aa).

A helical membrane pass occupies residues 16-32 (WLAVHALAVPTVFFLGA). His20 contacts heme.

The protein belongs to the PsbE/PsbF family. In terms of assembly, heterodimer of an alpha subunit and a beta subunit. PSII is composed of 1 copy each of membrane proteins PsbA, PsbB, PsbC, PsbD, PsbE, PsbF, PsbH, PsbI, PsbJ, PsbK, PsbL, PsbM, PsbT, PsbX, PsbY, PsbZ, Psb30/Ycf12, at least 3 peripheral proteins of the oxygen-evolving complex and a large number of cofactors. It forms dimeric complexes. Heme b is required as a cofactor.

The protein localises to the plastid. Its subcellular location is the chloroplast thylakoid membrane. Functionally, this b-type cytochrome is tightly associated with the reaction center of photosystem II (PSII). PSII is a light-driven water:plastoquinone oxidoreductase that uses light energy to abstract electrons from H(2)O, generating O(2) and a proton gradient subsequently used for ATP formation. It consists of a core antenna complex that captures photons, and an electron transfer chain that converts photonic excitation into a charge separation. This Chlorella vulgaris (Green alga) protein is Cytochrome b559 subunit beta.